Consider the following 146-residue polypeptide: Large ribosomal subunit protein bL21 (146 aa).

Residues 96–146 form a disordered region; that stretch reads KKKTRRKMGHRQELTRVMVKSISITNSTPKTSSKTEVKKKSTSPKASNPEN.

It belongs to the bacterial ribosomal protein bL21 family. Part of the 50S ribosomal subunit. Contacts protein L20.

In terms of biological role, this protein binds to 23S rRNA in the presence of protein L20. This is Large ribosomal subunit protein bL21 from Prochlorococcus marinus subsp. pastoris (strain CCMP1986 / NIES-2087 / MED4).